The sequence spans 964 residues: MATRSLEKLASIDAQLRALVPGKVSEDDKLVEYDALLLDRFLDILQDLHGEDLKETVQECYELSAEYEGKHDPKKLEELGNVLTSLDPGDSIVIAKAFSHMLNLANLAEEVQIAYRRRQKLKRGDFADENNATTESDIEETFKKLVGDLKKSPQEVFDALKNQTVDLVLTAHPTQSVRRSLLQKHGRIRDCLAQLYAKDITPDDKQELDEALQREIQAAFRTDEIRRTAPTPQDEMRAGMSYFHETIWKGVPKFLRRVDTALKNIGINERLPYNAPLIQFSSWMGGDRDGNPRVTLEVTRDVCLLARMMAANLYYSQIEELMFELSMWRCNDDLRIRAAELYRSSRRDTKHYIEFWKTIPPSEPYRVILGDVRDKLYQTRERTRQMLAHGISDIPEDATYNNVEQFLEPLELCYRSLCECGDRPIADGSLLDFLRQVSTFGLSFVRLDIRQESDRHTDVLDAITQHLEIGSYREWSEERRQEWLLSELSGKRPLFGPDLPRTEEIADVLDTLHVIAELPSDCFGAYIISMATAPSDVLAVELLQRECHVKQPLRVVPLFEKLDDLESASAAVARLFSIEWYRNRINGKQEVMVGYSDSGKDAGRFSAAWQLYKAQEELIKVAKEHGVKLTMFHGRGGTVGRGGGPTHLAILSQPPDTIQGSLRVTVQGEVIEQSFGEEHLCFRTLQRFTAATLEHGMHPPVSPKPEWRALMDEIAVIATEKYRSIVFKEPRFVEYSALATPELEYGRMNIGSRPSKRKPSGGIESLRAIPWIFAWTQTRFHLPVWLGFGAAFKYAIDKDIKNLRMFHEMYNEWPFFRVTIDLVEMVFAKGNPGIAALYDKLLVSEDLLPFGELLRSNYEETRSLLLQIAGHKDLLEGDPYLKQRLRLRDSYITTLNLLQAYTLKRIRDPNYHVTLRPHISKDYMESKSAAELVQLNPTSEYAPGLEDTLILTMKGIAAGLQNTG.

Position 11 is a phosphoserine (serine 11). Active-site residues include histidine 172 and lysine 600.

Belongs to the PEPCase type 1 family. As to quaternary structure, homotetramer. Requires Mg(2+) as cofactor.

Its subcellular location is the cytoplasm. The enzyme catalyses oxaloacetate + phosphate = phosphoenolpyruvate + hydrogencarbonate. The protein operates within photosynthesis; C4 acid pathway. With respect to regulation, by light-reversible phosphorylation. Through the carboxylation of phosphoenolpyruvate (PEP) it forms oxaloacetate, a four-carbon dicarboxylic acid source for the tricarboxylic acid cycle. The polypeptide is Phosphoenolpyruvate carboxylase (PPC) (Nicotiana tabacum (Common tobacco)).